We begin with the raw amino-acid sequence, 482 residues long: Probable cytosol aminopeptidase (482 aa).

Mn(2+)-binding residues include lysine 251 and aspartate 256. Lysine 263 is a catalytic residue. 3 residues coordinate Mn(2+): aspartate 274, aspartate 333, and glutamate 335. The active site involves arginine 337.

Belongs to the peptidase M17 family. Requires Mn(2+) as cofactor.

It is found in the cytoplasm. It carries out the reaction Release of an N-terminal amino acid, Xaa-|-Yaa-, in which Xaa is preferably Leu, but may be other amino acids including Pro although not Arg or Lys, and Yaa may be Pro. Amino acid amides and methyl esters are also readily hydrolyzed, but rates on arylamides are exceedingly low.. It catalyses the reaction Release of an N-terminal amino acid, preferentially leucine, but not glutamic or aspartic acids.. In terms of biological role, presumably involved in the processing and regular turnover of intracellular proteins. Catalyzes the removal of unsubstituted N-terminal amino acids from various peptides. The polypeptide is Probable cytosol aminopeptidase (Acinetobacter baylyi (strain ATCC 33305 / BD413 / ADP1)).